We begin with the raw amino-acid sequence, 91 residues long: uncharacterized protein (91 aa).

The first 25 residues, 1-25 (MLLQRIGIEHLRIWILLLLISLVPA), serve as a signal peptide directing secretion.

This is an uncharacterized protein from Caenorhabditis elegans.